The chain runs to 181 residues: ECF RNA polymerase sigma factor EcfG (181 aa).

Residues 15 to 77 are sigma-70 factor domain-2; it reads VPSLRAFAIS…FRSDYRKRRR (63 aa). The segment at 103 to 155 is sigma-70 factor domain-4; the sequence is EEFRAALDKLPQDQREALILVGASGFSYEDAAAICGCAVGTIKSRVNRARSKL.

Belongs to the sigma-70 factor family. ECF subfamily.

Its function is as follows. Sigma factors are initiation factors that promote the attachment of RNA polymerase to specific initiation sites and are then released. Regulates expression of hpnP under a variety of stresses, including high temperature, pH stress, and presence of nonionic osmolytes. This chain is ECF RNA polymerase sigma factor EcfG, found in Rhodopseudomonas palustris (strain TIE-1).